We begin with the raw amino-acid sequence, 140 residues long: Pre-mRNA-splicing factor NTC20 (140 aa).

Ser139 is subject to Phosphoserine.

As to quaternary structure, belongs to the NTC complex (or PRP19-associated complex), composed of at least CEF1, CLF1, ISY1, NTC20, SNT309, SYF1, SYF2, and PRP19. The NTC complex associates with the spliceosome after the release of the U1 and U4 snRNAs and forms the CWC spliceosome subcomplex (or CEF1-associated complex) reminiscent of a late-stage spliceosome composed also of the U2, U5 and U6 snRNAs and at least BUD13, BRR2, CDC40, CUS1, CWC2, CWC15, CWC21, CWC22, CWC23, CWC24, CWC25, CWC27, ECM2, HSH155, IST3, LEA1, MSL1, PRP8, PRP9, PRP11, PRP21, PRP22, PRP45, PRP46, SLU7, SMB1, SMD1, SMD2, SMD3, SMX2, SMX3, SNU114, SPP2, RSE1 and YJU2. Interacts with CEF1, CLF1, ISY1, PRP46, and SYF1.

The protein localises to the nucleus. In terms of biological role, involved in pre-mRNA splicing. As a component of the NTC complex, associates to the spliceosome to mediate conformational rearrangement or to stabilize the structure of the spliceosome after U4 snRNA dissociation, which leads to spliceosome maturation. This Saccharomyces cerevisiae (strain ATCC 204508 / S288c) (Baker's yeast) protein is Pre-mRNA-splicing factor NTC20 (NTC20).